We begin with the raw amino-acid sequence, 392 residues long: Protein RecA (392 aa).

Positions 1 to 21 (MALETKPAQDPATEIKHELDP) are disordered. 83-90 (GPESSGKT) is a binding site for ATP. Residues 372–392 (DAAKDTKATAAPAAKSSRAKA) are disordered. Residues 379–392 (ATAAPAAKSSRAKA) are compositionally biased toward low complexity.

It belongs to the RecA family.

It is found in the cytoplasm. Its function is as follows. Can catalyze the hydrolysis of ATP in the presence of single-stranded DNA, the ATP-dependent uptake of single-stranded DNA by duplex DNA, and the ATP-dependent hybridization of homologous single-stranded DNAs. It interacts with LexA causing its activation and leading to its autocatalytic cleavage. This chain is Protein RecA, found in Bifidobacterium breve.